Here is a 351-residue protein sequence, read N- to C-terminus: Ceramide hydroxylase (351 aa).

The next 4 membrane-spanning stretches (helical) occupy residues 26–46 (AAIY…GFLI), 47–67 (AATT…MLAL), 141–161 (GFLF…AILI), and 204–224 (VACW…VVPV).

Belongs to the fatty acid desaturase type 1 family.

It is found in the cell inner membrane. It participates in lipid metabolism; sphingolipid metabolism. Functionally, involved in de novo bacterial ceramide synthesis. The protein is Ceramide hydroxylase of Caulobacter vibrioides (strain NA1000 / CB15N) (Caulobacter crescentus).